The chain runs to 1291 residues: DNA-directed RNA polymerase subunit beta (1291 aa).

Belongs to the RNA polymerase beta chain family. As to quaternary structure, the RNAP catalytic core consists of 2 alpha, 1 beta, 1 beta' and 1 omega subunit. When a sigma factor is associated with the core the holoenzyme is formed, which can initiate transcription.

It carries out the reaction RNA(n) + a ribonucleoside 5'-triphosphate = RNA(n+1) + diphosphate. In terms of biological role, DNA-dependent RNA polymerase catalyzes the transcription of DNA into RNA using the four ribonucleoside triphosphates as substrates. The sequence is that of DNA-directed RNA polymerase subunit beta from Cytophaga hutchinsonii (strain ATCC 33406 / DSM 1761 / CIP 103989 / NBRC 15051 / NCIMB 9469 / D465).